The following is a 383-amino-acid chain: Na(+)/H(+) antiporter NhaA (383 aa).

11 helical membrane-spanning segments follow: residues 10–30 (LIGG…NNSP), 56–76 (LMHW…GLEI), 91–111 (IITP…IYLS), 121–141 (GWAI…ALLG), 150–170 (LLVI…IAIF), 174–194 (SLSL…IICN), 206–226 (VVLG…ATLA), 254–274 (PWII…ISFS), 289–308 (IIWG…LAVF), 327–347 (GISL…VLAF), and 355–375 (AIKI…YIVL).

It belongs to the NhaA Na(+)/H(+) (TC 2.A.33) antiporter family.

The protein resides in the cell inner membrane. The enzyme catalyses Na(+)(in) + 2 H(+)(out) = Na(+)(out) + 2 H(+)(in). Na(+)/H(+) antiporter that extrudes sodium in exchange for external protons. The sequence is that of Na(+)/H(+) antiporter NhaA from Francisella tularensis subsp. holarctica (strain FTNF002-00 / FTA).